Here is a 245-residue protein sequence, read N- to C-terminus: MSSDLVSKGMAQVFTGLGILLGAGRISSETHEEIMALLSADPGSNTGIMTGTNTGSTSIIPTQSKRVDMGDIPAGLPRPGKETPVSIQSHDLLGLGADLSTEAVQPPETFRAQASPSAPSKELKIICPWWLTDGYSCREHDQGKCPFYHDNVAGGVKHPLICHFWADGGRCTKSQKDCRFAHYPAPHRVTAPMPSKKKSKKLRSSVADDASHPDLGKARRHDPRDDEQNDEVWRNQGRARPGQEW.

2 C3H1-type zinc fingers span residues 121 to 152 (KELK…HDNV) and 161 to 185 (ICHF…HYPA). The segment at 186 to 245 (PHRVTAPMPSKKKSKKLRSSVADDASHPDLGKARRHDPRDDEQNDEVWRNQGRARPGQEW) is disordered. A compositionally biased stretch (basic and acidic residues) spans 209–226 (DASHPDLGKARRHDPRDD).

In terms of biological role, part of the gene cluster that mediates the biosynthesis of the brasilane terpene glycosides brasilane D and E. The biosynthesis starts with the activity of the terpene cyclase braA that converts farnesyl pyrophosphate into the sesquiterpene alcohol trichobrasilenol. Subsequently, trichobrasilenol is glycosylated by the O-glycosyltransferase braB putatively using UDP-GlcNAc as sugar donor to yield brasilane A. The latter then undergoes two rounds of oxidation performed by the cytochrome P450 monooxygenase braC. In the first round braC hydroxylates C-12 forming brasilane D, which serves as substrate in the second round to establish the epoxide at the bond between C-5 and C-10 and oxidize the alcohol at C-12 to an aldehyde leading to the final product brasilane E. This chain is Brasilane terpene glycosides biosynthesis cluster protein D, found in Annulohypoxylon truncatum (Hypoxylon truncatum).